The chain runs to 90 residues: Acylphosphatase (90 aa).

Residues 3-90 form the Acylphosphatase-like domain; it reads QYRIIVDGRV…DGFQKFNISY (88 aa). Catalysis depends on residues R18 and N36.

The protein belongs to the acylphosphatase family.

It carries out the reaction an acyl phosphate + H2O = a carboxylate + phosphate + H(+). This chain is Acylphosphatase (acyP), found in Bacillus licheniformis (strain ATCC 14580 / DSM 13 / JCM 2505 / CCUG 7422 / NBRC 12200 / NCIMB 9375 / NCTC 10341 / NRRL NRS-1264 / Gibson 46).